A 196-amino-acid polypeptide reads, in one-letter code: Glycerol-3-phosphate acyltransferase (196 aa).

4 helical membrane passes run 5–25 (GLIAFAFGYLLGSIPFGMILT), 70–90 (VVIALLLSGPGAAMAATLGAF), 111–131 (IGVLLGLFWPAALAFCAIWLL), and 152–172 (LLLWGFGHPQFALLFAVLTVL).

The protein belongs to the PlsY family. As to quaternary structure, probably interacts with PlsX.

It localises to the cell inner membrane. It catalyses the reaction an acyl phosphate + sn-glycerol 3-phosphate = a 1-acyl-sn-glycero-3-phosphate + phosphate. The protein operates within lipid metabolism; phospholipid metabolism. Functionally, catalyzes the transfer of an acyl group from acyl-phosphate (acyl-PO(4)) to glycerol-3-phosphate (G3P) to form lysophosphatidic acid (LPA). This enzyme utilizes acyl-phosphate as fatty acyl donor, but not acyl-CoA or acyl-ACP. The sequence is that of Glycerol-3-phosphate acyltransferase from Nitrobacter winogradskyi (strain ATCC 25391 / DSM 10237 / CIP 104748 / NCIMB 11846 / Nb-255).